The following is a 576-amino-acid chain: 4-alpha-glucanotransferase, chloroplastic/amyloplastic (576 aa).

Residues 1 to 52 (MAIHTCFSLIPSSFSSPKLPYPKNTTFQSPIPKLSRPTFMFDRKGSFQNGTA) constitute a chloroplast transit peptide.

This sequence belongs to the disproportionating enzyme family. As to expression, present in leaves, stems, roots, and stolons but is most abundant in developing and mature tubers.

The protein resides in the plastid. It is found in the chloroplast. Its subcellular location is the amyloplast. It catalyses the reaction Transfers a segment of a (1-&gt;4)-alpha-D-glucan to a new position in an acceptor, which may be glucose or a (1-&gt;4)-alpha-D-glucan.. Functionally, may act during starch breakdown to convert small oligosaccharides into larger molecules upon which starch phosphorylase can act, or may change the structure of starch molecules and grain architecture by modifying chain length, or may generate from starch and glucose oligosaccharides which can serve either as primers for new starch phosphoenzyme. This Solanum tuberosum (Potato) protein is 4-alpha-glucanotransferase, chloroplastic/amyloplastic (DPEP).